The primary structure comprises 488 residues: Prostaglandin E2 receptor EP4 subtype (488 aa).

Over 1-19 (MSTPVANASASSMPELLNN) the chain is Extracellular. An N-linked (GlcNAc...) asparagine glycan is attached at Asn7. The chain crosses the membrane as a helical span at residues 20-43 (PVTIPAVMFIFGVVGNLVAIVVLC). Topologically, residues 44 to 55 (KSRKEQKETTFY) are cytoplasmic. The chain crosses the membrane as a helical span at residues 56-79 (TLVCGLAVTDLLGTLLVSPVTIAT). Residues 80-96 (YMKGQWPGGQALCDYST) are Extracellular-facing. Cys92 and Cys170 form a disulfide bridge. Residues 97–115 (FILLFFGLSGLSIICAMSI) form a helical membrane-spanning segment. The Cytoplasmic segment spans residues 116–135 (ERYLAINHAYFYSHYVDKRL). The chain crosses the membrane as a helical span at residues 136-160 (AGLTLFAVYASNVLFCALPNMGLGR). Residues 161-184 (SRLQFPDTWCFIDWRTNVTAHAAF) are Extracellular-facing. Asn177 carries an N-linked (GlcNAc...) asparagine glycan. Residues 185-211 (SYMYAGFSSFLILATVLCNVLVCGALL) form a helical membrane-spanning segment. Residues 212–270 (RMHRQFMRRTSLGTEQHHAAAAAAVTSAACRGHPTASPALPRLSDFRRRRSFRRIAGAE) are Cytoplasmic-facing. Residues 271 to 298 (IQMVILLIATSLVVLICSIPLVVRVFIN) form a helical membrane-spanning segment. The Extracellular segment spans residues 299–315 (QLYQPDLVREISQNPDL). A helical membrane pass occupies residues 316 to 335 (QAIRIASVNPILDPWIYILL). At 336-488 (RKTVLSKAIE…ETLNLSEKCI (153 aa)) the chain is on the cytoplasmic side. Residues 358–371 (RRDRSGQHCSDSRR) are compositionally biased toward basic and acidic residues. Positions 358–381 (RRDRSGQHCSDSRRTSSAMSTHSR) are disordered. Positions 372 to 381 (TSSAMSTHSR) are enriched in polar residues. Phosphoserine occurs at positions 377, 380, 382, and 385. The disordered stretch occupies residues 456 to 475 (EVGGGGRAGPTPKGSSLQVT).

This sequence belongs to the G-protein coupled receptor 1 family. As to quaternary structure, interacts with FEM1A. In terms of processing, phosphorylation mediates agonist-mediated desensitization by promoting cytoplasmic retention. In terms of tissue distribution, highly expressed in intestine, duodenal epithelium, uterus, thymus and adrenal cortex. Lower but significant expression in whole adrenal, lung, spleen, stomach, and kidney. In this latter organ, the receptor is localized in the glomeruli and the transitional epithelium of the renal calyx.

It is found in the cell membrane. In terms of biological role, receptor for prostaglandin E2 (PGE2). The activity of this receptor is mediated by G(s) proteins that stimulate adenylate cyclase. Has a relaxing effect on smooth muscle. May play an important role in regulating renal hemodynamics, intestinal epithelial transport, adrenal aldosterone secretion, and uterine function. The chain is Prostaglandin E2 receptor EP4 subtype (PTGER4) from Oryctolagus cuniculus (Rabbit).